We begin with the raw amino-acid sequence, 105 residues long: Cortistatin (105 aa).

The signal sequence occupies residues 1-18 (MPLSPGLLLLLLSGATAT). A propeptide spanning residues 19-74 (AALPLEGGPTGRDSEHMQEAAGIRKSSLLTFLAWWFEWTSQASAGPLIGEEAREVA) is cleaved from the precursor. Cys93 and Cys104 form a disulfide bridge.

It belongs to the somatostatin family. As to expression, expressed in a subset of GABAergic cells in the cortex and hippocampus.

The protein resides in the secreted. Its function is as follows. Binds to all human somatostatin receptor (SSTR) subtypes. It also inhibits cAMP production induced by forskolin through SSTRs. This chain is Cortistatin (CORT), found in Homo sapiens (Human).